The primary structure comprises 140 residues: MLQPKRTKYRKQQKGRVTGVATRGHRIAFGSFAIKSLEGGWITARQIEAARIAMTRAMKREGQVWIRVFPDKPITQKPAEVRMGKGKGAPEYWVACIKPGTILFESGGVSIETAQESLRLAAQKLPFKTKFIVRPDYVAS.

Belongs to the universal ribosomal protein uL16 family. In terms of assembly, part of the 50S ribosomal subunit.

Functionally, binds 23S rRNA and is also seen to make contacts with the A and possibly P site tRNAs. This chain is Large ribosomal subunit protein uL16, found in Cytophaga hutchinsonii (strain ATCC 33406 / DSM 1761 / CIP 103989 / NBRC 15051 / NCIMB 9469 / D465).